The primary structure comprises 435 residues: Protein translocase subunit SecY (435 aa).

10 consecutive transmembrane segments (helical) span residues 19 to 39 (ILFTIFIILVFRIGTTITVPG), 68 to 88 (FSVFALGVSPYITASIVVQLL), 116 to 136 (YIALVLAFVQAIGITAGFDTL), 147 to 167 (VQTYALICVLLATGSMIVTWL), 179 to 199 (GVSMIIFAGIVSAIPDMIKGI), 216 to 236 (FIFVGILIVAVLLIIYFTTFV), 269 to 289 (VIPVIFASSITAAPAAIFQVV), 311 to 331 (ISGMFMYAFLIVLFTFFYTFV), 372 to 392 (VGSLFLGFISILPILAKDVFG), and 395 to 415 (DAVALGGTSLLIIISTGIEGM).

This sequence belongs to the SecY/SEC61-alpha family. In terms of assembly, component of the Sec protein translocase complex. Heterotrimer consisting of SecY, SecE and SecG subunits. The heterotrimers can form oligomers, although 1 heterotrimer is thought to be able to translocate proteins. Interacts with the ribosome. Interacts with SecDF, and other proteins may be involved. Interacts with SecA.

It localises to the cell membrane. In terms of biological role, the central subunit of the protein translocation channel SecYEG. Consists of two halves formed by TMs 1-5 and 6-10. These two domains form a lateral gate at the front which open onto the bilayer between TMs 2 and 7, and are clamped together by SecE at the back. The channel is closed by both a pore ring composed of hydrophobic SecY resides and a short helix (helix 2A) on the extracellular side of the membrane which forms a plug. The plug probably moves laterally to allow the channel to open. The ring and the pore may move independently. The protein is Protein translocase subunit SecY of Streptococcus sanguinis (strain SK36).